We begin with the raw amino-acid sequence, 104 residues long: Small ribosomal subunit protein bS18 (104 aa).

Basic and acidic residues predominate over residues 1–14; that stretch reads MMNNEHDNFQKEVE. The disordered stretch occupies residues 1–25; it reads MMNNEHDNFQKEVETTTETTFNREE.

Belongs to the bacterial ribosomal protein bS18 family. As to quaternary structure, part of the 30S ribosomal subunit. Forms a tight heterodimer with protein bS6.

In terms of biological role, binds as a heterodimer with protein bS6 to the central domain of the 16S rRNA, where it helps stabilize the platform of the 30S subunit. This is Small ribosomal subunit protein bS18 from Mycoplasma pneumoniae (strain ATCC 29342 / M129 / Subtype 1) (Mycoplasmoides pneumoniae).